Consider the following 419-residue polypeptide: Tyrosine--tRNA ligase (419 aa).

Tyr-34 lines the L-tyrosine pocket. The 'HIGH' region signature appears at Pro-39–His-48. Positions 169 and 173 each coordinate L-tyrosine. Residues Lys-229–Ser-233 carry the 'KMSKS' region motif. Position 232 (Lys-232) interacts with ATP. The S4 RNA-binding domain occupies Leu-352–Lys-419.

The protein belongs to the class-I aminoacyl-tRNA synthetase family. TyrS type 1 subfamily. In terms of assembly, homodimer.

It is found in the cytoplasm. The catalysed reaction is tRNA(Tyr) + L-tyrosine + ATP = L-tyrosyl-tRNA(Tyr) + AMP + diphosphate + H(+). Functionally, catalyzes the attachment of tyrosine to tRNA(Tyr) in a two-step reaction: tyrosine is first activated by ATP to form Tyr-AMP and then transferred to the acceptor end of tRNA(Tyr). The chain is Tyrosine--tRNA ligase from Streptococcus agalactiae serotype Ia (strain ATCC 27591 / A909 / CDC SS700).